A 124-amino-acid polypeptide reads, in one-letter code: Large ribosomal subunit protein bL12 (124 aa).

This sequence belongs to the bacterial ribosomal protein bL12 family. In terms of assembly, homodimer. Part of the ribosomal stalk of the 50S ribosomal subunit. Forms a multimeric L10(L12)X complex, where L10 forms an elongated spine to which 2 to 4 L12 dimers bind in a sequential fashion. Binds GTP-bound translation factors.

Functionally, forms part of the ribosomal stalk which helps the ribosome interact with GTP-bound translation factors. Is thus essential for accurate translation. The protein is Large ribosomal subunit protein bL12 of Liberibacter africanus subsp. capensis.